Consider the following 425-residue polypeptide: MIDTKVLRANFQEVKAKLIPKGEDLSDFDKFEELDEKRRELIGKVEELKGKRNEVSQQVAVLKREKKDADHIIKEMREVGEEIKKLDEELRTVETTLETILLSIPNIPHDSVPVGETEDDNIEIRKWGEAPAFSYEPKPHWDIADHLNILDFERASKVTGSRFVFYKGLGARLERALYNFMLDLHVDEYDYTEVIPPYMVNRTSMTGTGQLPKFEEDAFKIREEDYFLIPTAEVPITNMHRDEILSGENLPINYAAFSACFRSEAGSAGRDTRGLIRQHQFNKVELVKFVKPEDSYEELEKLTNQAERVLQLLELPYRVMSMCTGDLGFTAAKKYDIEVWIPSQDTYREISSCSNFEAFQARRANIRFRREAKGKPEHVHTLNGSGLAVGRTVAAILENYQQEDGSVIIPKVLRPYMGNKEVIKP.

Residue 231–233 (TAE) coordinates L-serine. Residue 262–264 (RSE) participates in ATP binding. Position 285 (E285) interacts with L-serine. 349 to 352 (EISS) provides a ligand contact to ATP. Residue S385 participates in L-serine binding.

Belongs to the class-II aminoacyl-tRNA synthetase family. Type-1 seryl-tRNA synthetase subfamily. As to quaternary structure, homodimer. The tRNA molecule binds across the dimer.

The protein resides in the cytoplasm. It catalyses the reaction tRNA(Ser) + L-serine + ATP = L-seryl-tRNA(Ser) + AMP + diphosphate + H(+). The enzyme catalyses tRNA(Sec) + L-serine + ATP = L-seryl-tRNA(Sec) + AMP + diphosphate + H(+). The protein operates within aminoacyl-tRNA biosynthesis; selenocysteinyl-tRNA(Sec) biosynthesis; L-seryl-tRNA(Sec) from L-serine and tRNA(Sec): step 1/1. Catalyzes the attachment of serine to tRNA(Ser). Is also able to aminoacylate tRNA(Sec) with serine, to form the misacylated tRNA L-seryl-tRNA(Sec), which will be further converted into selenocysteinyl-tRNA(Sec). This Bacillus velezensis (strain DSM 23117 / BGSC 10A6 / LMG 26770 / FZB42) (Bacillus amyloliquefaciens subsp. plantarum) protein is Serine--tRNA ligase.